The following is a 425-amino-acid chain: Stabilizer of axonemal microtubules 4 (425 aa).

Disordered stretches follow at residues 259–297 and 315–335; these read RGSDRDTGYSRVSERSLNPRMPTPSSQPTSMSHRSYQPP and NKEPTGFTLNNPSYVRSSYEQ. Over residues 260-272 the composition is skewed to basic and acidic residues; sequence GSDRDTGYSRVSE. Over residues 277–290 the composition is skewed to low complexity; it reads PRMPTPSSQPTSMS. Over residues 321–332 the composition is skewed to polar residues; it reads FTLNNPSYVRSS.

In terms of assembly, microtubule inner protein component of sperm flagellar doublet microtubules. Interacts with PPP1CA. Expressed in brain, ovaries and testis. Expressed in the tracheal epithelium and in secondary spermatocytes and spermatids present in the seminiferous tubule. Expressed in ependymal cells lining the ventricular walls of the brain.

Its subcellular location is the cell projection. It localises to the cilium. The protein resides in the cytoplasm. The protein localises to the cytoskeleton. It is found in the flagellum axoneme. The chain is Stabilizer of axonemal microtubules 4 from Rattus norvegicus (Rat).